The primary structure comprises 511 residues: Coatomer subunit delta (511 aa).

Positions 168–177 are enriched in basic and acidic residues; it reads QARRDAERQG. The disordered stretch occupies residues 168–196; the sequence is QARRDAERQGKKAPGFGGFGSSTVSGGST. Ser223 is subject to Phosphoserine. N6-acetyllysine occurs at positions 233 and 241. Position 244 is a phosphoserine (Ser244). Residues 271-511 form the MHD domain; sequence MESVHMKIEE…TFLVDKYEIL (241 aa). Lys309 and Lys351 each carry N6-acetyllysine. At Ser493 the chain carries Phosphoserine.

The protein belongs to the adaptor complexes medium subunit family. Delta-COP subfamily. Oligomeric complex that consists of at least the alpha, beta, beta', gamma, delta, epsilon and zeta subunits. Ubiquitously expressed.

It is found in the cytoplasm. Its subcellular location is the golgi apparatus membrane. It localises to the cytoplasmic vesicle. The protein resides in the COPI-coated vesicle membrane. In terms of biological role, the coatomer is a cytosolic protein complex that binds to dilysine motifs and reversibly associates with Golgi non-clathrin-coated vesicles, which further mediate biosynthetic protein transport from the ER, via the Golgi up to the trans Golgi network. Coatomer complex is required for budding from Golgi membranes, and is essential for the retrograde Golgi-to-ER transport of dilysine-tagged proteins. In mammals, the coatomer can only be recruited by membranes associated to ADP-ribosylation factors (ARFs), which are small GTP-binding proteins; the complex also influences the Golgi structural integrity, as well as the processing, activity, and endocytic recycling of LDL receptors. The sequence is that of Coatomer subunit delta (ARCN1) from Bos taurus (Bovine).